The chain runs to 240 residues: Probable alpha-aspartyl dipeptidase (240 aa).

Active-site charge relay system residues include serine 125, aspartate 140, and histidine 162.

Belongs to the peptidase S51 family.

Its subcellular location is the cytoplasm. The enzyme catalyses Dipeptidase E catalyzes the hydrolysis of dipeptides Asp-|-Xaa. It does not act on peptides with N-terminal Glu, Asn or Gln, nor does it cleave isoaspartyl peptides.. Hydrolyzes dipeptides containing N-terminal aspartate residues. The sequence is that of Probable alpha-aspartyl dipeptidase from Drosophila melanogaster (Fruit fly).